Here is a 134-residue protein sequence, read N- to C-terminus: Small ribosomal subunit protein uS8 (134 aa).

The protein belongs to the universal ribosomal protein uS8 family. Part of the 30S ribosomal subunit. Contacts proteins S5 and S12.

One of the primary rRNA binding proteins, it binds directly to 16S rRNA central domain where it helps coordinate assembly of the platform of the 30S subunit. This is Small ribosomal subunit protein uS8 from Thermosipho africanus (strain TCF52B).